A 467-amino-acid chain; its full sequence is Fumarate hydratase class II (467 aa).

Substrate is bound by residues 98–100, arginine 126, 129–132, 139–141, and threonine 187; these read SGT, HPND, and SSN. Residue histidine 188 is the Proton donor/acceptor of the active site. The active site involves serine 318. Substrate is bound by residues serine 319 and 324–326; that span reads KVN.

It belongs to the class-II fumarase/aspartase family. Fumarase subfamily. As to quaternary structure, homotetramer.

It localises to the cytoplasm. The catalysed reaction is (S)-malate = fumarate + H2O. Its pathway is carbohydrate metabolism; tricarboxylic acid cycle; (S)-malate from fumarate: step 1/1. Functionally, involved in the TCA cycle. Catalyzes the stereospecific interconversion of fumarate to L-malate. This Escherichia coli O157:H7 protein is Fumarate hydratase class II.